The following is a 226-amino-acid chain: Cytidylate kinase (226 aa).

An ATP-binding site is contributed by 11–19 (GPASAGKST).

This sequence belongs to the cytidylate kinase family. Type 1 subfamily.

The protein localises to the cytoplasm. It carries out the reaction CMP + ATP = CDP + ADP. It catalyses the reaction dCMP + ATP = dCDP + ADP. In Limosilactobacillus fermentum (strain NBRC 3956 / LMG 18251) (Lactobacillus fermentum), this protein is Cytidylate kinase.